Consider the following 114-residue polypeptide: Putative movement protein (114 aa).

The chain crosses the membrane as a helical span at residues 27–47 (LIGIILLVTVCLIVLWVCIML). Positions 79–114 (RTPFEATGPERERNWDARRQSTTVNPASQPNTGSVF) are disordered. The segment covering 86–97 (GPERERNWDARR) has biased composition (basic and acidic residues). A compositionally biased stretch (polar residues) spans 98–114 (QSTTVNPASQPNTGSVF).

It belongs to the nanovirus movement protein family.

It is found in the host cell membrane. Functionally, may transport viral genome to neighboring plant cells directly through plasmosdesmata, without any budding. The movement protein allows efficient cell to cell propagation, by bypassing the host cell wall barrier. This is Putative movement protein (DNA-M) from Faba bean necrotic yellows virus (isolate Syrian SV292-88) (FBNYV).